Consider the following 156-residue polypeptide: Small ribosomal subunit protein uS7 (156 aa).

This sequence belongs to the universal ribosomal protein uS7 family. In terms of assembly, part of the 30S ribosomal subunit. Contacts proteins S9 and S11.

Functionally, one of the primary rRNA binding proteins, it binds directly to 16S rRNA where it nucleates assembly of the head domain of the 30S subunit. Is located at the subunit interface close to the decoding center, probably blocks exit of the E-site tRNA. This is Small ribosomal subunit protein uS7 from Leuconostoc citreum (strain KM20).